Consider the following 857-residue polypeptide: Autoinducer 2 sensor kinase/phosphatase LuxQ (857 aa).

2 consecutive transmembrane segments (helical) span residues 20–40 and 283–303; these read IIFL…YYFS and LGLA…RSWI. The region spanning 490-712 is the Histidine kinase domain; it reads KMSHEIRTPL…TFYLSIPVEK (223 aa). A Phosphohistidine; by autocatalysis modification is found at histidine 493. The Response regulatory domain occupies 735-850; sequence KVLLVEDNHT…ELHDELLHFK (116 aa). Residue aspartate 784 is modified to 4-aspartylphosphate.

As to quaternary structure, binds the complex formed by the autoinducer and LuxP.

Its subcellular location is the cell inner membrane. It carries out the reaction ATP + protein L-histidine = ADP + protein N-phospho-L-histidine.. Functionally, at low cell density, in absence of autoinducer has a kinase activity, and autophosphorylates on a histidine residue. The phosphoryl group is then transferred to an aspartate residue in the response regulator domain. The phosphoryl group is transferred to LuxU, and ultimately to LuxO. At high cell density, in the presence of autoinducer, the kinase activity is inactivated, and the response regulator domain has a phosphatase activity. This is Autoinducer 2 sensor kinase/phosphatase LuxQ (luxQ) from Vibrio vulnificus (strain YJ016).